Reading from the N-terminus, the 163-residue chain is Putative pre-16S rRNA nuclease (163 aa).

This sequence belongs to the YqgF nuclease family.

Its subcellular location is the cytoplasm. In terms of biological role, could be a nuclease involved in processing of the 5'-end of pre-16S rRNA. In Rhizobium leguminosarum bv. trifolii (strain WSM2304), this protein is Putative pre-16S rRNA nuclease.